A 1071-amino-acid chain; its full sequence is ATP-dependent helicase/deoxyribonuclease subunit B (1071 aa).

It belongs to the helicase family. AddB/RexB type 2 subfamily. As to quaternary structure, heterodimer of AddA and RexB. It depends on Mg(2+) as a cofactor.

In terms of biological role, the heterodimer acts as both an ATP-dependent DNA helicase and an ATP-dependent, dual-direction single-stranded exonuclease. Recognizes the chi site generating a DNA molecule suitable for the initiation of homologous recombination. This subunit has 5' -&gt; 3' nuclease activity but not helicase activity. The sequence is that of ATP-dependent helicase/deoxyribonuclease subunit B from Streptococcus pyogenes serotype M28 (strain MGAS6180).